We begin with the raw amino-acid sequence, 233 residues long: Phosphoribosylformylglycinamidine synthase subunit PurQ (233 aa).

The region spanning S3 to A233 is the Glutamine amidotransferase type-1 domain. C87 (nucleophile) is an active-site residue. Active-site residues include H204 and E206.

As to quaternary structure, part of the FGAM synthase complex composed of 1 PurL, 1 PurQ and 2 PurS subunits.

The protein resides in the cytoplasm. It catalyses the reaction N(2)-formyl-N(1)-(5-phospho-beta-D-ribosyl)glycinamide + L-glutamine + ATP + H2O = 2-formamido-N(1)-(5-O-phospho-beta-D-ribosyl)acetamidine + L-glutamate + ADP + phosphate + H(+). It carries out the reaction L-glutamine + H2O = L-glutamate + NH4(+). It participates in purine metabolism; IMP biosynthesis via de novo pathway; 5-amino-1-(5-phospho-D-ribosyl)imidazole from N(2)-formyl-N(1)-(5-phospho-D-ribosyl)glycinamide: step 1/2. In terms of biological role, part of the phosphoribosylformylglycinamidine synthase complex involved in the purines biosynthetic pathway. Catalyzes the ATP-dependent conversion of formylglycinamide ribonucleotide (FGAR) and glutamine to yield formylglycinamidine ribonucleotide (FGAM) and glutamate. The FGAM synthase complex is composed of three subunits. PurQ produces an ammonia molecule by converting glutamine to glutamate. PurL transfers the ammonia molecule to FGAR to form FGAM in an ATP-dependent manner. PurS interacts with PurQ and PurL and is thought to assist in the transfer of the ammonia molecule from PurQ to PurL. This is Phosphoribosylformylglycinamidine synthase subunit PurQ from Rhodopseudomonas palustris (strain HaA2).